Here is a 317-residue protein sequence, read N- to C-terminus: Protoheme IX farnesyltransferase (317 aa).

9 consecutive transmembrane segments (helical) span residues 36-56 (VMVLVIFTALVGMVVSDATVN), 57-77 (PVIAAISLLMIAVGAGASGCL), 108-128 (LAFGIVLSVGSVLILGLASNW), 129-149 (LAAGLLAFTIVFYAVIYSMWL), 157-177 (IVIGGAAGALPPVVGQAAVTG), 184-204 (LVLFAIIFIWTPPHFWALALV), 230-247 (IIWYSLVLAPLALLPVWL), 251-273 (GWLYAVVGVLGGLGMLAGAVQVY), and 284-304 (AAMGLFAFSILYLFLLFSALL).

It belongs to the UbiA prenyltransferase family. Protoheme IX farnesyltransferase subfamily.

Its subcellular location is the cell inner membrane. The catalysed reaction is heme b + (2E,6E)-farnesyl diphosphate + H2O = Fe(II)-heme o + diphosphate. It participates in porphyrin-containing compound metabolism; heme O biosynthesis; heme O from protoheme: step 1/1. Its function is as follows. Converts heme B (protoheme IX) to heme O by substitution of the vinyl group on carbon 2 of heme B porphyrin ring with a hydroxyethyl farnesyl side group. In Methylorubrum extorquens (strain CM4 / NCIMB 13688) (Methylobacterium extorquens), this protein is Protoheme IX farnesyltransferase.